Here is a 382-residue protein sequence, read N- to C-terminus: 1-deoxy-D-xylulose 5-phosphate reductoisomerase (382 aa).

Positions 10, 11, 12, 13, 38, and 120 each coordinate NADPH. Lysine 121 provides a ligand contact to 1-deoxy-D-xylulose 5-phosphate. Position 122 (glutamate 122) interacts with NADPH. Aspartate 146 is a binding site for Mn(2+). The 1-deoxy-D-xylulose 5-phosphate site is built by serine 147, glutamate 148, serine 172, and histidine 195. Residue glutamate 148 coordinates Mn(2+). Glycine 201 contributes to the NADPH binding site. Serine 208, asparagine 213, lysine 214, and glutamate 217 together coordinate 1-deoxy-D-xylulose 5-phosphate. Glutamate 217 contributes to the Mn(2+) binding site.

It belongs to the DXR family. Mg(2+) is required as a cofactor. The cofactor is Mn(2+).

The catalysed reaction is 2-C-methyl-D-erythritol 4-phosphate + NADP(+) = 1-deoxy-D-xylulose 5-phosphate + NADPH + H(+). The protein operates within isoprenoid biosynthesis; isopentenyl diphosphate biosynthesis via DXP pathway; isopentenyl diphosphate from 1-deoxy-D-xylulose 5-phosphate: step 1/6. Functionally, catalyzes the NADPH-dependent rearrangement and reduction of 1-deoxy-D-xylulose-5-phosphate (DXP) to 2-C-methyl-D-erythritol 4-phosphate (MEP). The chain is 1-deoxy-D-xylulose 5-phosphate reductoisomerase from Thermoanaerobacter sp. (strain X514).